A 469-amino-acid polypeptide reads, in one-letter code: DNA repair and recombination protein rad22 (469 aa).

The segment at 265 to 296 is disordered; it reads PAANNHHSEKAGTQINNKDKGSHNSAKPVQRS. The segment covering 287-296 has biased composition (polar residues); that stretch reads HNSAKPVQRS. 2 positions are modified to phosphoserine: Ser296 and Ser319. The interval 429–469 is disordered; it reads LHDSTTSHNKSDLMRTNSDPQSAMRSRENYDATVDKKAKKG. The segment covering 431-452 has biased composition (polar residues); that stretch reads DSTTSHNKSDLMRTNSDPQSAM. Basic and acidic residues predominate over residues 453-469; that stretch reads RSRENYDATVDKKAKKG.

It belongs to the RAD52 family. As to quaternary structure, interacts with rhp51.

It is found in the nucleus. Active in the repair of DNA damage and in mating-type switching. Probably involved in the repair of DNA double-strands breaks. Has a role in promoting S phase completion. The polypeptide is DNA repair and recombination protein rad22 (rad22) (Schizosaccharomyces pombe (strain 972 / ATCC 24843) (Fission yeast)).